The primary structure comprises 386 residues: 5-amino-6-(D-ribitylamino)uracil--L-tyrosine 4-hydroxyphenyl transferase (386 aa).

Residues 56–303 (VSYVINRNLN…MAVARLYLGD (248 aa)) enclose the Radical SAM core domain. The [4Fe-4S] cluster site is built by Cys-70, Cys-74, and Cys-77.

The protein belongs to the radical SAM superfamily. CofH family. Consists of two subunits, CofG and CofH. [4Fe-4S] cluster serves as cofactor.

It carries out the reaction 5-amino-6-(D-ribitylamino)uracil + L-tyrosine + S-adenosyl-L-methionine = 5-amino-5-(4-hydroxybenzyl)-6-(D-ribitylimino)-5,6-dihydrouracil + 2-iminoacetate + 5'-deoxyadenosine + L-methionine + H(+). The protein operates within cofactor biosynthesis; coenzyme F0 biosynthesis. Its function is as follows. Catalyzes the radical-mediated synthesis of 5-amino-5-(4-hydroxybenzyl)-6-(D-ribitylimino)-5,6-dihydrouracil from 5-amino-6-(D-ribitylamino)uracil and L-tyrosine. This is 5-amino-6-(D-ribitylamino)uracil--L-tyrosine 4-hydroxyphenyl transferase from Synechococcus elongatus (strain ATCC 33912 / PCC 7942 / FACHB-805) (Anacystis nidulans R2).